The sequence spans 145 residues: Large ribosomal subunit protein uL11 (145 aa).

It belongs to the universal ribosomal protein uL11 family. Part of the ribosomal stalk of the 50S ribosomal subunit. Interacts with L10 and the large rRNA to form the base of the stalk. L10 forms an elongated spine to which L12 dimers bind in a sequential fashion forming a multimeric L10(L12)X complex. Post-translationally, one or more lysine residues are methylated.

Forms part of the ribosomal stalk which helps the ribosome interact with GTP-bound translation factors. This chain is Large ribosomal subunit protein uL11, found in Rickettsia massiliae (strain Mtu5).